The following is a 218-amino-acid chain: Adenylate kinase (218 aa).

Glycine 10–threonine 15 is an ATP binding site. The segment at serine 30–valine 59 is NMP. Residues threonine 31, arginine 36, glutamate 57–valine 59, and glutamine 92 each bind AMP. Residues glycine 122 to aspartate 159 form an LID region. Residues arginine 123 and threonine 132–tyrosine 133 contribute to the ATP site. Arginine 156 and arginine 167 together coordinate AMP. Glutamine 202 is an ATP binding site.

It belongs to the adenylate kinase family. In terms of assembly, monomer.

The protein localises to the cytoplasm. The catalysed reaction is AMP + ATP = 2 ADP. It functions in the pathway purine metabolism; AMP biosynthesis via salvage pathway; AMP from ADP: step 1/1. Its function is as follows. Catalyzes the reversible transfer of the terminal phosphate group between ATP and AMP. Plays an important role in cellular energy homeostasis and in adenine nucleotide metabolism. The chain is Adenylate kinase from Francisella tularensis subsp. holarctica (strain LVS).